A 577-amino-acid polypeptide reads, in one-letter code: Glycine--tRNA ligase (577 aa).

Substrate is bound by residues Arg-96 and Glu-161. Residues 193–195 (RNE), 203–208 (IRLREF), 319–320 (EI), and 434–437 (GIDR) contribute to the ATP site. 208-212 (FSQAE) contributes to the substrate binding site. A substrate-binding site is contributed by 430–434 (EPSFG).

The protein belongs to the class-II aminoacyl-tRNA synthetase family.

The protein localises to the cytoplasm. It carries out the reaction tRNA(Gly) + glycine + ATP = glycyl-tRNA(Gly) + AMP + diphosphate. In terms of biological role, catalyzes the attachment of glycine to tRNA(Gly). In Methanothrix thermoacetophila (strain DSM 6194 / JCM 14653 / NBRC 101360 / PT) (Methanosaeta thermophila), this protein is Glycine--tRNA ligase.